Here is a 372-residue protein sequence, read N- to C-terminus: 4-hydroxy-3-methylbut-2-en-1-yl diphosphate synthase (flavodoxin) (372 aa).

Residues cysteine 270, cysteine 273, cysteine 305, and glutamate 312 each coordinate [4Fe-4S] cluster.

The protein belongs to the IspG family. [4Fe-4S] cluster serves as cofactor.

It catalyses the reaction (2E)-4-hydroxy-3-methylbut-2-enyl diphosphate + oxidized [flavodoxin] + H2O + 2 H(+) = 2-C-methyl-D-erythritol 2,4-cyclic diphosphate + reduced [flavodoxin]. Its pathway is isoprenoid biosynthesis; isopentenyl diphosphate biosynthesis via DXP pathway; isopentenyl diphosphate from 1-deoxy-D-xylulose 5-phosphate: step 5/6. In terms of biological role, converts 2C-methyl-D-erythritol 2,4-cyclodiphosphate (ME-2,4cPP) into 1-hydroxy-2-methyl-2-(E)-butenyl 4-diphosphate. The chain is 4-hydroxy-3-methylbut-2-en-1-yl diphosphate synthase (flavodoxin) from Escherichia coli O9:H4 (strain HS).